Here is a 451-residue protein sequence, read N- to C-terminus: POU domain, class 3, transcription factor 1 (451 aa).

5 disordered regions span residues 1-21, 69-114, 127-154, 186-253, and 395-451; these read MATT…GTGP, AHPQ…GFHA, AWAQ…HQPQ, GLHH…PSSD, and KRMT…GSVQ. 3 stretches are compositionally biased toward gly residues: residues 11–20, 76–85, and 95–112; these read GPGGGAGGTG, TGGGGGGDWA, and AGGG…GGGF. Residues 190-199 show a composition bias toward basic and acidic residues; sequence ALHEDGHEAQ. The span at 220-232 shows a compositional bias: low complexity; that stretch reads AGGLHAAAAHLHP. Residues 247 to 321 enclose the POU-specific domain; that stretch reads EDAPSSDDLE…LLNKWLEETD (75 aa). The homeobox DNA-binding region spans 339-398; that stretch reads KRKKRTSIEVGVKGALESHFLKCPKPSAHEITGLADSLQLEKEVVRVWFCNRRQKEKRMT. Residues 427 to 436 are compositionally biased toward pro residues; that stretch reads PSAPPPPPPA.

It belongs to the POU transcription factor family. Class-3 subfamily. Expressed in embryonal stem cells and in the developing brain.

Its subcellular location is the nucleus. Functionally, transcription factor that binds to the octamer motif (5'-ATTTGCAT-3'). Acts as a transcriptional activator when binding cooperatively with SOX4, SOX11, or SOX12 to gene promoters. Acts as a transcriptional repressor of myelin-specific genes. The polypeptide is POU domain, class 3, transcription factor 1 (POU3F1) (Homo sapiens (Human)).